Here is a 207-residue protein sequence, read N- to C-terminus: ATP-dependent Clp protease proteolytic subunit (207 aa).

Ser111 acts as the Nucleophile in catalysis. His136 is a catalytic residue.

Belongs to the peptidase S14 family. Fourteen ClpP subunits assemble into 2 heptameric rings which stack back to back to give a disk-like structure with a central cavity, resembling the structure of eukaryotic proteasomes.

The protein resides in the cytoplasm. The enzyme catalyses Hydrolysis of proteins to small peptides in the presence of ATP and magnesium. alpha-casein is the usual test substrate. In the absence of ATP, only oligopeptides shorter than five residues are hydrolyzed (such as succinyl-Leu-Tyr-|-NHMec, and Leu-Tyr-Leu-|-Tyr-Trp, in which cleavage of the -Tyr-|-Leu- and -Tyr-|-Trp bonds also occurs).. In terms of biological role, cleaves peptides in various proteins in a process that requires ATP hydrolysis. Has a chymotrypsin-like activity. Plays a major role in the degradation of misfolded proteins. The polypeptide is ATP-dependent Clp protease proteolytic subunit (Yersinia enterocolitica serotype O:8 / biotype 1B (strain NCTC 13174 / 8081)).